Consider the following 158-residue polypeptide: 2-C-methyl-D-erythritol 2,4-cyclodiphosphate synthase (158 aa).

A divalent metal cation contacts are provided by aspartate 8 and histidine 10. 4-CDP-2-C-methyl-D-erythritol 2-phosphate-binding positions include aspartate 8–histidine 10 and histidine 34–serine 35. Residue histidine 42 coordinates a divalent metal cation. 4-CDP-2-C-methyl-D-erythritol 2-phosphate-binding positions include aspartate 56 to glycine 58, phenylalanine 61 to aspartate 65, alanine 100 to leucine 106, threonine 132 to glutamate 135, and phenylalanine 139.

The protein belongs to the IspF family. In terms of assembly, homotrimer. It depends on a divalent metal cation as a cofactor.

It carries out the reaction 4-CDP-2-C-methyl-D-erythritol 2-phosphate = 2-C-methyl-D-erythritol 2,4-cyclic diphosphate + CMP. The protein operates within isoprenoid biosynthesis; isopentenyl diphosphate biosynthesis via DXP pathway; isopentenyl diphosphate from 1-deoxy-D-xylulose 5-phosphate: step 4/6. Its function is as follows. Involved in the biosynthesis of isopentenyl diphosphate (IPP) and dimethylallyl diphosphate (DMAPP), two major building blocks of isoprenoid compounds. Catalyzes the conversion of 4-diphosphocytidyl-2-C-methyl-D-erythritol 2-phosphate (CDP-ME2P) to 2-C-methyl-D-erythritol 2,4-cyclodiphosphate (ME-CPP) with a corresponding release of cytidine 5-monophosphate (CMP). The polypeptide is 2-C-methyl-D-erythritol 2,4-cyclodiphosphate synthase (Clostridium beijerinckii (strain ATCC 51743 / NCIMB 8052) (Clostridium acetobutylicum)).